The sequence spans 281 residues: Aliphatic sulfonates import ATP-binding protein SsuB (281 aa).

Residues 40–263 (LDIRGLRKSF…QRGSAELAAL (224 aa)) form the ABC transporter domain. An ATP-binding site is contributed by 72–79 (GRSGCGKS).

This sequence belongs to the ABC transporter superfamily. Aliphatic sulfonates importer (TC 3.A.1.17.2) family. As to quaternary structure, the complex is composed of two ATP-binding proteins (SsuB), two transmembrane proteins (SsuC) and a solute-binding protein (SsuA).

It is found in the cell inner membrane. It catalyses the reaction ATP + H2O + aliphatic sulfonate-[sulfonate-binding protein]Side 1 = ADP + phosphate + aliphatic sulfonateSide 2 + [sulfonate-binding protein]Side 1.. Functionally, part of the ABC transporter complex SsuABC involved in aliphatic sulfonates import. Responsible for energy coupling to the transport system. The sequence is that of Aliphatic sulfonates import ATP-binding protein SsuB from Rhodopseudomonas palustris (strain ATCC BAA-98 / CGA009).